The chain runs to 525 residues: Keratin, type II cytoskeletal 71 (525 aa).

The interval 1-131 is head; sequence MSRQFTCKSG…DPEIQKVRAQ (131 aa). The segment at 132-167 is coil 1A; sequence EREQIKALNNKFASFIDKVRFLEQQNQVLETKWELL. Positions 132–445 constitute an IF rod domain; it reads EREQIKALNN…KLLESEECRM (314 aa). The linker 1 stretch occupies residues 168–186; sequence QQLDLNNCKNNLEPILEGY. A coil 1B region spans residues 187-278; it reads ISNLRKQLET…CLYEAEIAQI (92 aa). Positions 279–302 are linker 12; that stretch reads QSHISDMSVILSMDNNRDLNLDSI. The tract at residues 303–441 is coil 2; it reads IDEVRAQYED…ATYRKLLESE (139 aa). The tail stretch occupies residues 442–525; that stretch reads ECRMSGEFPS…LSAPSKKASR (84 aa). The segment at 492–525 is disordered; it reads VRGGESRSRSSTTDYKDALGKGSSLSAPSKKASR. Residues 495 to 510 show a composition bias toward basic and acidic residues; it reads GESRSRSSTTDYKDAL.

The protein belongs to the intermediate filament family. Heterodimer of a type I and a type II keratin. Associates with KRT16 and/or KRT17.

It localises to the cytoplasm. It is found in the cytoskeleton. Its function is as follows. Plays a central role in hair formation. Essential component of keratin intermediate filaments in the inner root sheath (IRS) of the hair follicle. This Bos taurus (Bovine) protein is Keratin, type II cytoskeletal 71 (KRT71).